Reading from the N-terminus, the 214-residue chain is Cytochrome b (214 aa).

4 consecutive transmembrane segments (helical) span residues 31-51 (FGSM…FLAI), 75-96 (WIMQ…YTHI), 111-131 (WLSG…GYVL), and 176-196 (FFAL…IHIL). Residues histidine 81 and histidine 95 each coordinate heme b. Heme b-binding residues include histidine 180 and histidine 194. Histidine 199 is a binding site for a ubiquinone.

This sequence belongs to the cytochrome b family. As to quaternary structure, the cytochrome bc1 complex contains 3 respiratory subunits (MT-CYB, CYC1 and UQCRFS1), 2 core proteins (UQCRC1 and UQCRC2) and probably 6 low-molecular weight proteins. The cofactor is heme b.

The protein resides in the mitochondrion inner membrane. Functionally, component of the ubiquinol-cytochrome c reductase complex (complex III or cytochrome b-c1 complex) that is part of the mitochondrial respiratory chain. The b-c1 complex mediates electron transfer from ubiquinol to cytochrome c. Contributes to the generation of a proton gradient across the mitochondrial membrane that is then used for ATP synthesis. This is Cytochrome b (MT-CYB) from Lachesis muta muta (Bushmaster).